A 485-amino-acid chain; its full sequence is Ribulose bisphosphate carboxylase large chain (485 aa).

Positions 1-2 (MS) are excised as a propeptide. At Pro3 the chain carries N-acetylproline. Lys14 is subject to N6,N6,N6-trimethyllysine. 2 residues coordinate substrate: Asn123 and Thr173. The active-site Proton acceptor is the Lys175. Substrate is bound at residue Lys177. Positions 201, 203, and 204 each coordinate Mg(2+). Position 201 is an N6-carboxylysine (Lys201). Catalysis depends on His294, which acts as the Proton acceptor. Arg295, His327, and Ser379 together coordinate substrate.

This sequence belongs to the RuBisCO large chain family. Type I subfamily. Heterohexadecamer of 8 large chains and 8 small chains; disulfide-linked. The disulfide link is formed within the large subunit homodimers. The cofactor is Mg(2+). In terms of processing, the disulfide bond which can form in the large chain dimeric partners within the hexadecamer appears to be associated with oxidative stress and protein turnover.

It localises to the plastid. The protein resides in the chloroplast. It catalyses the reaction 2 (2R)-3-phosphoglycerate + 2 H(+) = D-ribulose 1,5-bisphosphate + CO2 + H2O. The catalysed reaction is D-ribulose 1,5-bisphosphate + O2 = 2-phosphoglycolate + (2R)-3-phosphoglycerate + 2 H(+). RuBisCO catalyzes two reactions: the carboxylation of D-ribulose 1,5-bisphosphate, the primary event in carbon dioxide fixation, as well as the oxidative fragmentation of the pentose substrate in the photorespiration process. Both reactions occur simultaneously and in competition at the same active site. The sequence is that of Ribulose bisphosphate carboxylase large chain from Flaveria bidentis (Coastal plain yellowtops).